An 892-amino-acid chain; its full sequence is Leucine--tRNA ligase (892 aa).

The 'HIGH' region signature appears at 42-52 (PYPSGKLHMGH). The short motif at 640–644 (TMSKS) is the 'KMSKS' region element. Lys-643 lines the ATP pocket.

Belongs to the class-I aminoacyl-tRNA synthetase family.

Its subcellular location is the cytoplasm. It catalyses the reaction tRNA(Leu) + L-leucine + ATP = L-leucyl-tRNA(Leu) + AMP + diphosphate. The chain is Leucine--tRNA ligase from Albidiferax ferrireducens (strain ATCC BAA-621 / DSM 15236 / T118) (Rhodoferax ferrireducens).